A 388-amino-acid chain; its full sequence is 5-hydroxytryptamine receptor 1B (388 aa).

Residues 1 to 29 are disordered; the sequence is MEQPSRLCSPPASGSLTSSQTNHSTFPNP. The Extracellular segment spans residues 1-45; that stretch reads MEQPSRLCSPPASGSLTSSQTNHSTFPNPNCSAPDLEPYQDSIAL. Residues 12–29 are compositionally biased toward polar residues; it reads ASGSLTSSQTNHSTFPNP. N-linked (GlcNAc...) asparagine glycans are attached at residues N22 and N30. The chain crosses the membrane as a helical span at residues 46–71; the sequence is PWKVLLATFLGLITLGTTLSNAFVIA. Residues 72-85 lie on the Cytoplasmic side of the membrane; it reads TVSRTRKLHTPANY. The helical transmembrane segment at 86-110 threads the bilayer; the sequence is LIASLAVTDLLVSILVMPISTMYTV. The Extracellular portion of the chain corresponds to 111–118; that stretch reads TGRWTLGQ. Residues 119 to 144 traverse the membrane as a helical segment; it reads VVCDFWLSSDITCCTASILHLCVIAL. The cysteines at positions 121 and 197 are disulfide-linked. Residues D128 and T133 each contribute to the ergotamine site. Positions 145-147 match the DRY motif; important for ligand-induced conformation changes and signaling motif; it reads DRY. The Cytoplasmic portion of the chain corresponds to 145–164; that stretch reads DRYWAITDAVEYSAKRTPKR. Residues 165 to 183 traverse the membrane as a helical segment; it reads AAGMIIMVWVFSVSISMPP. Over 184 to 203 the chain is Extracellular; sequence LFWRQAKAEEVADCSVNTDH. V199 provides a ligand contact to ergotamine. Residues 204–227 form a helical membrane-spanning segment; sequence ILYTVYSTVGAFYFPTLLLIALYG. Topologically, residues 228–313 are cytoplasmic; that stretch reads RIYVEARSRI…AARERKATRT (86 aa). A disordered region spans residues 249-282; the sequence is LTRAQLITDSPGSSSSGTSINSRAPEGPSESGSP. The span at 255-270 shows a compositional bias: low complexity; sequence ITDSPGSSSSGTSINS. A helical membrane pass occupies residues 314–335; the sequence is LGIILGAFIVCWLPFFIISLAL. At 336–345 the chain is on the extracellular side; the sequence is PICDDACWFH. Residues 346-368 traverse the membrane as a helical segment; sequence LAIFDFFNWLGYLNSLINPIIYT. Residues 363 to 367 carry the NPxxY motif; important for ligand-induced conformation changes and signaling motif; it reads NPIIY. The Cytoplasmic portion of the chain corresponds to 369–388; it reads KSNDDFKQAFQKLMRFRRTS.

It belongs to the G-protein coupled receptor 1 family. In terms of assembly, homodimer. Heterodimer with HTR1D. In terms of processing, phosphorylated. Desensitization of the receptor may be mediated by its phosphorylation. Palmitoylated.

It localises to the cell membrane. In terms of biological role, G-protein coupled receptor for 5-hydroxytryptamine (serotonin). Also functions as a receptor for ergot alkaloid derivatives, various anxiolytic and antidepressant drugs and other psychoactive substances, such as lysergic acid diethylamide (LSD). Ligand binding causes a conformation change that triggers signaling via guanine nucleotide-binding proteins (G proteins) and modulates the activity of downstream effectors, such as adenylate cyclase. HTR1B is coupled to G(i)/G(o) G alpha proteins and mediates inhibitory neurotransmission by inhibiting adenylate cyclase activity. Arrestin family members inhibit signaling via G proteins and mediate activation of alternative signaling pathways. Regulates the release of 5-hydroxytryptamine, dopamine and acetylcholine in the brain, and thereby affects neural activity, nociceptive processing, pain perception, mood and behavior. Besides, plays a role in vasoconstriction of cerebral arteries. The polypeptide is 5-hydroxytryptamine receptor 1B (HTR1B) (Didelphis virginiana (North American opossum)).